We begin with the raw amino-acid sequence, 351 residues long: Prostaglandin reductase 2 (351 aa).

Substrate is bound at residue F99–Y100. NADP(+) is bound by residues G165–G168, K192, Y208, N231, C253–Y259, F287–V289, and N337. L288 to L290 contributes to the substrate binding site.

The protein belongs to the NADP-dependent oxidoreductase L4BD family. Monomer. Widely expressed.

Its subcellular location is the cytoplasm. It carries out the reaction 13,14-dihydro-15-oxo-prostaglandin E2 + NAD(+) = 15-oxoprostaglandin E2 + NADH + H(+). The enzyme catalyses 13,14-dihydro-15-oxo-prostaglandin E2 + NADP(+) = 15-oxoprostaglandin E2 + NADPH + H(+). It catalyses the reaction 13,14-dihydro-15-oxo-PGF2alpha + NADP(+) = 15-oxoprostaglandin F2alpha + NADPH + H(+). The catalysed reaction is 13,14-dihydro-15-oxo-prostaglandin E1 + NADP(+) = 15-oxoprostaglandin E1 + NADPH + H(+). It carries out the reaction 13,14-dihydro-15-oxo-prostaglandin F1alpha + NADP(+) = 15-oxoprostaglandin F1alpha + NADPH + H(+). In terms of biological role, functions as 15-oxo-prostaglandin 13-reductase and acts on 15-keto-PGE1, 15-keto-PGE2, 15-keto-PGE1-alpha and 15-keto-PGE2-alpha with highest activity towards 15-keto-PGE2. Overexpression represses transcriptional activity of PPARG and inhibits adipocyte differentiation. The sequence is that of Prostaglandin reductase 2 from Homo sapiens (Human).